The following is a 538-amino-acid chain: Efflux pump radE (538 aa).

Basic and acidic residues-rich tracts occupy residues 1-12 (MATSRDFGREPP), 20-35 (EAGHTLHDGCQHVSEH), and 65-74 (DPKEEERDPN). 2 disordered regions span residues 1-35 (MATSRDFGREPPRQQQDSDEAGHTLHDGCQHVSEH) and 65-90 (DPKEEERDPNIVDWDGPDDPANPQNW). Helical transmembrane passes span 100–120 (AVLSIITFMVPLASSMFAPGI), 134–154 (LATFVVSVYILGLAAGPLVLA), 163–183 (VVIYHVGNVLFIIFTVACALS), 194–214 (FLCGLVGAGPIAIGGGTIADL), 225–245 (SVWSLGPLLGPSVGPVAGGFL), 253–273 (WIFWVLAITAGVITIAGLLVL), 327–347 (PICLVLSVYSAFVYAMIYFMI), 362–382 (EGIVGLVYIALGLGMLFGVVV), 409–429 (IPPTLLAGFLIPTGLFIYGWT), 436–456 (WAVPLLGALLAGMGICIINIS), 482–502 (IFGATFPLFALQMYETLGLGW), and 505–525 (SLLAFIAVAMFAIPPLLFYYG).

Belongs to the major facilitator superfamily.

It localises to the cell membrane. Efflux pump that might be required for efficient secretion of radicicol or other secondary metabolies produced by the radicicol gene cluster. The protein is Efflux pump radE of Floropilus chiversii (Chaetomium chiversii).